The chain runs to 499 residues: Ribose import ATP-binding protein RbsA 1 (499 aa).

ABC transporter domains follow at residues 5-240 (LEMR…GRSI) and 249-494 (TEPG…TAGS). Residue 37 to 44 (GENGAGKS) coordinates ATP.

It belongs to the ABC transporter superfamily. Ribose importer (TC 3.A.1.2.1) family. In terms of assembly, the complex is composed of an ATP-binding protein (RbsA), two transmembrane proteins (RbsC) and a solute-binding protein (RbsB).

The protein localises to the cell membrane. The catalysed reaction is D-ribose(out) + ATP + H2O = D-ribose(in) + ADP + phosphate + H(+). Its function is as follows. Part of the ABC transporter complex RbsABC involved in ribose import. Responsible for energy coupling to the transport system. This is Ribose import ATP-binding protein RbsA 1 from Rubrobacter xylanophilus (strain DSM 9941 / JCM 11954 / NBRC 16129 / PRD-1).